The following is a 317-amino-acid chain: Type II methyltransferase M.NgoBI (317 aa).

The SAM-dependent MTase C5-type domain occupies 2–302; sequence YKTIDLFSGI…KICSLLFPAR (301 aa). Cys71 is an active-site residue.

It belongs to the class I-like SAM-binding methyltransferase superfamily. C5-methyltransferase family.

It catalyses the reaction a 2'-deoxycytidine in DNA + S-adenosyl-L-methionine = a 5-methyl-2'-deoxycytidine in DNA + S-adenosyl-L-homocysteine + H(+). In terms of biological role, a methylase, recognizes the double-stranded sequence 5'-RGCGCY-3', methylates C-5 on both strands, and protects the DNA from cleavage by the NgoBI endonuclease. The chain is Type II methyltransferase M.NgoBI (ngoBIM) from Neisseria gonorrhoeae.